Here is a 633-residue protein sequence, read N- to C-terminus: Pesticidal crystal protein Cry2Aa (633 aa).

The protein belongs to the delta endotoxin family.

Promotes colloidosmotic lysis by binding to the midgut epithelial cells of both dipteran (Aedes aegypti) and lepidopteran (Manduca sexta) larvae. The sequence is that of Pesticidal crystal protein Cry2Aa (cry2Aa) from Bacillus thuringiensis subsp. kurstaki.